A 249-amino-acid chain; its full sequence is 3-deoxy-manno-octulosonate cytidylyltransferase (249 aa).

The protein belongs to the KdsB family.

The protein localises to the cytoplasm. The catalysed reaction is 3-deoxy-alpha-D-manno-oct-2-ulosonate + CTP = CMP-3-deoxy-beta-D-manno-octulosonate + diphosphate. It functions in the pathway nucleotide-sugar biosynthesis; CMP-3-deoxy-D-manno-octulosonate biosynthesis; CMP-3-deoxy-D-manno-octulosonate from 3-deoxy-D-manno-octulosonate and CTP: step 1/1. Its pathway is bacterial outer membrane biogenesis; lipopolysaccharide biosynthesis. Functionally, activates KDO (a required 8-carbon sugar) for incorporation into bacterial lipopolysaccharide in Gram-negative bacteria. This chain is 3-deoxy-manno-octulosonate cytidylyltransferase, found in Aliivibrio fischeri (strain ATCC 700601 / ES114) (Vibrio fischeri).